The sequence spans 205 residues: UPF0637 protein OB1420 (205 aa).

It belongs to the UPF0637 family.

The chain is UPF0637 protein OB1420 from Oceanobacillus iheyensis (strain DSM 14371 / CIP 107618 / JCM 11309 / KCTC 3954 / HTE831).